We begin with the raw amino-acid sequence, 171 residues long: 3-hydroxydecanoyl-[acyl-carrier-protein] dehydratase (171 aa).

His70 is an active-site residue.

This sequence belongs to the thioester dehydratase family. FabA subfamily. In terms of assembly, homodimer.

Its subcellular location is the cytoplasm. The catalysed reaction is a (3R)-hydroxyacyl-[ACP] = a (2E)-enoyl-[ACP] + H2O. It carries out the reaction (3R)-hydroxydecanoyl-[ACP] = (2E)-decenoyl-[ACP] + H2O. It catalyses the reaction (2E)-decenoyl-[ACP] = (3Z)-decenoyl-[ACP]. It functions in the pathway lipid metabolism; fatty acid biosynthesis. Its function is as follows. Necessary for the introduction of cis unsaturation into fatty acids. Catalyzes the dehydration of (3R)-3-hydroxydecanoyl-ACP to E-(2)-decenoyl-ACP and then its isomerization to Z-(3)-decenoyl-ACP. Can catalyze the dehydratase reaction for beta-hydroxyacyl-ACPs with saturated chain lengths up to 16:0, being most active on intermediate chain length. The chain is 3-hydroxydecanoyl-[acyl-carrier-protein] dehydratase from Shewanella sediminis (strain HAW-EB3).